The chain runs to 541 residues: Chaperonin GroEL 2 (541 aa).

ATP contacts are provided by residues 29–32 (TLGP), 86–90 (DGTTT), G413, 476–478 (NAA), and D492.

Belongs to the chaperonin (HSP60) family. As to quaternary structure, forms a cylinder of 14 subunits composed of two heptameric rings stacked back-to-back. Interacts with the co-chaperonin GroES.

It is found in the cytoplasm. It carries out the reaction ATP + H2O + a folded polypeptide = ADP + phosphate + an unfolded polypeptide.. In terms of biological role, together with its co-chaperonin GroES, plays an essential role in assisting protein folding. The GroEL-GroES system forms a nano-cage that allows encapsulation of the non-native substrate proteins and provides a physical environment optimized to promote and accelerate protein folding. The polypeptide is Chaperonin GroEL 2 (Streptomyces avermitilis (strain ATCC 31267 / DSM 46492 / JCM 5070 / NBRC 14893 / NCIMB 12804 / NRRL 8165 / MA-4680)).